We begin with the raw amino-acid sequence, 322 residues long: MSYSNLKLFALSSNKELAKKVSQTIGIPLGQSTVRQFSDGEIQVNIEESIRGHHVFILQSTSSPVNDNLMEILIMVDALKRASAESVSVVMPYYGYARQDRKARSREPITSKLVANMLEVAGVDRLLTVDLHAAQIQGFFDIPVDHLMGAPLIADYFDRQGLVGDDVVVVSPDHGGVTRARKLAQCLKTPIAIIDKRRSVTKMNTSEVMNIIGNIKGKKCILIDDMIDTAGTICHAADALAEAGATAVYASCTHPVLSGPALDNIQNSAIEKLIVLDTIYLPEERLIDKIEQISIAELIGEAIIRIHEKRPLSPLFEMNKLK.

ATP contacts are provided by residues 39-41 and 98-99; these read DGE and RQ. 2 residues coordinate Mg(2+): H132 and D173. The active site involves K196. Residues R198, D224, and 228 to 232 contribute to the D-ribose 5-phosphate site; that span reads DTAGT.

The protein belongs to the ribose-phosphate pyrophosphokinase family. Class I subfamily. Homohexamer. Mg(2+) is required as a cofactor.

Its subcellular location is the cytoplasm. The enzyme catalyses D-ribose 5-phosphate + ATP = 5-phospho-alpha-D-ribose 1-diphosphate + AMP + H(+). It functions in the pathway metabolic intermediate biosynthesis; 5-phospho-alpha-D-ribose 1-diphosphate biosynthesis; 5-phospho-alpha-D-ribose 1-diphosphate from D-ribose 5-phosphate (route I): step 1/1. Functionally, involved in the biosynthesis of the central metabolite phospho-alpha-D-ribosyl-1-pyrophosphate (PRPP) via the transfer of pyrophosphoryl group from ATP to 1-hydroxyl of ribose-5-phosphate (Rib-5-P). The polypeptide is Ribose-phosphate pyrophosphokinase 1 (Streptococcus agalactiae serotype III (strain NEM316)).